Consider the following 177-residue polypeptide: Dual-action ribosomal maturation protein DarP (177 aa).

Belongs to the DarP family.

It is found in the cytoplasm. Member of a network of 50S ribosomal subunit biogenesis factors which assembles along the 30S-50S interface, preventing incorrect 23S rRNA structures from forming. Promotes peptidyl transferase center (PTC) maturation. The sequence is that of Dual-action ribosomal maturation protein DarP from Histophilus somni (strain 129Pt) (Haemophilus somnus).